The primary structure comprises 126 residues: Holo-[acyl-carrier-protein] synthase (126 aa).

The Mg(2+) site is built by Asp6 and Glu55.

It belongs to the P-Pant transferase superfamily. AcpS family. The cofactor is Mg(2+).

The protein localises to the cytoplasm. The catalysed reaction is apo-[ACP] + CoA = holo-[ACP] + adenosine 3',5'-bisphosphate + H(+). Functionally, transfers the 4'-phosphopantetheine moiety from coenzyme A to a Ser of acyl-carrier-protein. This is Holo-[acyl-carrier-protein] synthase from Chlorobium limicola (strain DSM 245 / NBRC 103803 / 6330).